A 444-amino-acid chain; its full sequence is Methylenetetrahydrofolate--tRNA-(uracil-5-)-methyltransferase TrmFO (444 aa).

Residue 10-15 (GAGLAG) participates in FAD binding.

This sequence belongs to the MnmG family. TrmFO subfamily. The cofactor is FAD.

Its subcellular location is the cytoplasm. It carries out the reaction uridine(54) in tRNA + (6R)-5,10-methylene-5,6,7,8-tetrahydrofolate + NADH + H(+) = 5-methyluridine(54) in tRNA + (6S)-5,6,7,8-tetrahydrofolate + NAD(+). The enzyme catalyses uridine(54) in tRNA + (6R)-5,10-methylene-5,6,7,8-tetrahydrofolate + NADPH + H(+) = 5-methyluridine(54) in tRNA + (6S)-5,6,7,8-tetrahydrofolate + NADP(+). Catalyzes the folate-dependent formation of 5-methyl-uridine at position 54 (M-5-U54) in all tRNAs. In Streptococcus agalactiae serotype Ia (strain ATCC 27591 / A909 / CDC SS700), this protein is Methylenetetrahydrofolate--tRNA-(uracil-5-)-methyltransferase TrmFO.